The primary structure comprises 525 residues: PE-PGRS family protein PE_PGRS47 (525 aa).

The region spanning 1 to 93 is the PE domain; the sequence is MSFVIAAPEF…AYSYASAEAA (93 aa). The disordered stretch occupies residues 506 to 525; that stretch reads VGGAGGLLEGQNGENGLLPS. The span at 514–525 shows a compositional bias: low complexity; sequence EGQNGENGLLPS.

This sequence belongs to the mycobacterial PE family. PGRS subfamily.

The protein resides in the secreted. It is found in the cell surface. Its subcellular location is the host cytoplasm. It localises to the host cytosol. In terms of biological role, contributes to evasion of both innate and adaptive immunity. Inhibits autophagy in infected host phagocytes and inhibits major histocompatibility complex (MHC) class II antigen presentation by mycobacteria-infected dendritic cells. Has an important role in the growth and survival of M.tuberculosis, particularly during intracellular growth and in the later chronic phase of infection. This is PE-PGRS family protein PE_PGRS47 from Mycobacterium tuberculosis (strain ATCC 25618 / H37Rv).